The sequence spans 45 residues: C-phycocyanin beta subunit (45 aa).

Belongs to the phycobiliprotein family. Heterodimer of an alpha and a beta subunit. The hererodimer further assembles into trimers and the trimers into hexamers. Post-translationally, contains two covalently linked bilin chromophores.

The protein resides in the cellular thylakoid membrane. Light-harvesting photosynthetic bile pigment-protein from the phycobiliprotein complex (phycobilisome, PBS). Phycocyanin is the major phycobiliprotein in the PBS rod. The chain is C-phycocyanin beta subunit (cpcB) from Limnospira fusiformis (Arthrospira fusiformis).